Reading from the N-terminus, the 322-residue chain is Major serine/threonine-protein phosphatase PP2A-2 catalytic subunit (322 aa).

Mn(2+) contacts are provided by Asp-70, His-72, Asp-98, and Asn-130. His-131 (proton donor) is an active-site residue. Mn(2+) is bound by residues His-180 and His-254. Leu-322 carries the post-translational modification Leucine methyl ester.

This sequence belongs to the PPP phosphatase family. PP-2A subfamily. Mn(2+) is required as a cofactor.

The enzyme catalyses O-phospho-L-seryl-[protein] + H2O = L-seryl-[protein] + phosphate. It catalyses the reaction O-phospho-L-threonyl-[protein] + H2O = L-threonyl-[protein] + phosphate. Functionally, essential role in cell cycle control. PP2A may be involved in controlling the entry into mitosis, possibly acting as an inhibitor. This Schizosaccharomyces pombe (strain 972 / ATCC 24843) (Fission yeast) protein is Major serine/threonine-protein phosphatase PP2A-2 catalytic subunit (ppa2).